A 960-amino-acid polypeptide reads, in one-letter code: Testis anion transporter 1 (960 aa).

Residues 1–93 (MQPDRSFQSF…YRFKDWLLGD (93 aa)) lie on the Cytoplasmic side of the membrane. A helical transmembrane segment spans residues 94–114 (LLAGISVGLVQIPQVLMLGLL). The Extracellular segment spans residues 115-117 (ARH). Residues 118–138 (LIPPLNVSYAAFCASVIYGIF) form a helical membrane-spanning segment. Residue G139 is a topological domain, cytoplasmic. The chain crosses the membrane as a helical span at residues 140–160 (SCHQMSIGTFFLVSALAINVL). At 161 to 201 (RTQPFNRGHLLLGTFIQADFSNTSFYENYNRSLSSVASVTL) the chain is on the extracellular side. N-linked (GlcNAc...) asparagine glycosylation is present at N190. Helical transmembrane passes span 202-222 (LTGIIQLSMGMLGFGFIVAYI) and 223-243 (PEAAISAYLAATALHVMLSQL). Over 244–268 (TCIFGIMISYNSGPIAFFYNIINYC) the chain is Cytoplasmic. A helical transmembrane segment spans residues 269–289 (LGLPKANSTSILLFLTAMVAL). Topologically, residues 290–353 (RINKCIRISF…PVTPDMSNLT (64 aa)) are extracellular. A helical membrane pass occupies residues 354-374 (EVLIESFSLALVSSSLLVFLG). Residues 375 to 390 (KKIASFHNYDVNSNQD) are Cytoplasmic-facing. Residues 391–411 (LIAIGLCNVVSSFFRSYVFTG) form a helical membrane-spanning segment. The Extracellular portion of the chain corresponds to 412–427 (AVARTIIQDKTGGRQQ). A helical transmembrane segment spans residues 428-448 (FASLVGAGIMLLLMMKMARFF). At 449-453 (YRLPN) the chain is on the cytoplasmic side. Residues 454–474 (AIVAGIILSNVLPYLEAVYTL) traverse the membrane as a helical segment. The Extracellular portion of the chain corresponds to 475–494 (PSLWRQNQYDCLIWMVTFMS). Residues 495–515 (AILLGLDIGLVVAVTFAFFII) form a helical membrane-spanning segment. Topologically, residues 516-960 (TVQSHRTKIL…ADTSEDALEI (445 aa)) are cytoplasmic. Residues 541 to 792 (DYREVANIPG…LTLHDAVLFA (252 aa)) form the STAS domain. The interval 662-957 (ITSSSSQRNP…TSKADTSEDA (296 aa)) is interaction with RACGAP1. Disordered stretches follow at residues 807–857 (ESET…EESD) and 881–960 (EVEP…ALEI). Over residues 818–827 (ETDKKEESRH) the composition is skewed to basic and acidic residues. The segment covering 884-904 (PESELEPESELDQETELEPEP) has biased composition (acidic residues). The segment covering 926–935 (SPTQTQARTQ) has biased composition (polar residues).

The protein belongs to the SLC26A/SulP transporter (TC 2.A.53) family. Interacts with RACGAP1. Interacts with CFTR; stimulates anion transport activity of CFTR. Post-translationally, N-glycosylated.

The protein resides in the membrane. It carries out the reaction sulfate(out) + chloride(in) = sulfate(in) + chloride(out). It catalyses the reaction oxalate(in) + chloride(out) = oxalate(out) + chloride(in). Antiporter that mediates the exchange of sulfate and oxalate against chloride ions across a membrane. Stimulates anion transport activity of CFTR. May cooperate with CFTR in the regulation of chloride and bicarbonate ions fluxes required for activation of the ADCY10/PKA pathway during sperm motility and sperm capacitation. May play a role in sperm tail differentiation and motility and hence male fertility. The polypeptide is Testis anion transporter 1 (Bos taurus (Bovine)).